The primary structure comprises 358 residues: Aminomethyltransferase (358 aa).

The protein belongs to the GcvT family. The glycine cleavage system is composed of four proteins: P, T, L and H.

The enzyme catalyses N(6)-[(R)-S(8)-aminomethyldihydrolipoyl]-L-lysyl-[protein] + (6S)-5,6,7,8-tetrahydrofolate = N(6)-[(R)-dihydrolipoyl]-L-lysyl-[protein] + (6R)-5,10-methylene-5,6,7,8-tetrahydrofolate + NH4(+). Functionally, the glycine cleavage system catalyzes the degradation of glycine. In Francisella tularensis subsp. mediasiatica (strain FSC147), this protein is Aminomethyltransferase.